The sequence spans 134 residues: Thioredoxin H2-2 (134 aa).

The interval 1-20 (MGSFFSTMFTPPPAADDGGD) is disordered. One can recognise a Thioredoxin domain in the interval 3 to 130 (SFFSTMFTPP…LERKVNMFIS (128 aa)). Residues C56 and C59 each act as nucleophile in the active site. C56 and C59 are oxidised to a cystine.

This sequence belongs to the thioredoxin family. Plant H-type subfamily.

The protein localises to the cytoplasm. Probable thiol-disulfide oxidoreductase that may be involved in the redox regulation of a number of cytosolic enzymes. The polypeptide is Thioredoxin H2-2 (Oryza sativa subsp. japonica (Rice)).